The following is a 239-amino-acid chain: tRNA (guanine-N(7)-)-methyltransferase (239 aa).

Residues glutamate 68, glutamate 93, aspartate 120, and aspartate 143 each coordinate S-adenosyl-L-methionine. Aspartate 143 is a catalytic residue. Residues lysine 147, aspartate 180, and 217–220 each bind substrate; that span reads TKFE.

This sequence belongs to the class I-like SAM-binding methyltransferase superfamily. TrmB family.

The enzyme catalyses guanosine(46) in tRNA + S-adenosyl-L-methionine = N(7)-methylguanosine(46) in tRNA + S-adenosyl-L-homocysteine. It functions in the pathway tRNA modification; N(7)-methylguanine-tRNA biosynthesis. Catalyzes the formation of N(7)-methylguanine at position 46 (m7G46) in tRNA. The polypeptide is tRNA (guanine-N(7)-)-methyltransferase (Vibrio cholerae serotype O1 (strain ATCC 39315 / El Tor Inaba N16961)).